A 366-amino-acid polypeptide reads, in one-letter code: D-alanine--D-alanine ligase (366 aa).

One can recognise an ATP-grasp domain in the interval 149-358 (KIAFDHAGLP…FSELVDTLIQ (210 aa)). 185–240 (ETTLEYPCFVKPANLGSSVGIAKVRSRSELETALDNAASYDRRIIVEAGVEAKELE) contributes to the ATP binding site. Mg(2+) is bound by residues aspartate 311, glutamate 325, and asparagine 327.

The protein belongs to the D-alanine--D-alanine ligase family. Mg(2+) serves as cofactor. It depends on Mn(2+) as a cofactor.

It localises to the cytoplasm. It carries out the reaction 2 D-alanine + ATP = D-alanyl-D-alanine + ADP + phosphate + H(+). The protein operates within cell wall biogenesis; peptidoglycan biosynthesis. Its function is as follows. Cell wall formation. This chain is D-alanine--D-alanine ligase, found in Trichodesmium erythraeum (strain IMS101).